The sequence spans 287 residues: Protease HtpX (287 aa).

2 helical membrane-spanning segments follow: residues 4 to 24 and 33 to 53; these read IFLL…VMSI and GGLL…SLAI. H139 lines the Zn(2+) pocket. E140 is an active-site residue. H143 contributes to the Zn(2+) binding site. The next 2 membrane-spanning stretches (helical) occupy residues 154 to 174 and 195 to 215; these read LIQG…AGII and AVVF…VAYF. E220 contacts Zn(2+).

Belongs to the peptidase M48B family. Zn(2+) serves as cofactor.

The protein localises to the cell inner membrane. This Shewanella baltica (strain OS223) protein is Protease HtpX.